The sequence spans 376 residues: Actin, macronuclear (376 aa).

This sequence belongs to the actin family.

The protein localises to the cytoplasm. It is found in the cytoskeleton. It catalyses the reaction ATP + H2O = ADP + phosphate + H(+). Its function is as follows. Actins are highly conserved proteins that are involved in various types of cell motility and are ubiquitously expressed in all eukaryotic cells. This Tetrahymena thermophila protein is Actin, macronuclear.